A 684-amino-acid polypeptide reads, in one-letter code: uncharacterized protein (684 aa).

Residues leucine 54–valine 239 form the Helicase ATP-binding domain. Residue threonine 67–serine 74 participates in ATP binding. Positions aspartate 181 to histidine 184 match the DEVH box motif. One can recognise a Helicase C-terminal domain in the interval leucine 264–phenylalanine 419.

Belongs to the helicase family.

This is an uncharacterized protein from Methanocaldococcus jannaschii (strain ATCC 43067 / DSM 2661 / JAL-1 / JCM 10045 / NBRC 100440) (Methanococcus jannaschii).